Here is a 222-residue protein sequence, read N- to C-terminus: UPF0128 protein PYRAB08320 (222 aa).

It belongs to the UPF0128 family.

This Pyrococcus abyssi (strain GE5 / Orsay) protein is UPF0128 protein PYRAB08320.